The following is a 326-amino-acid chain: Probable cell division protein WhiA (326 aa).

Positions 275–308 (SLDELGHHADPPMTKDAVAGRIRRLLAMADKKAV) form a DNA-binding region, H-T-H motif.

It belongs to the WhiA family.

In terms of biological role, involved in cell division and chromosome segregation. The protein is Probable cell division protein WhiA of Clavibacter sepedonicus (Clavibacter michiganensis subsp. sepedonicus).